A 180-amino-acid polypeptide reads, in one-letter code: ATP synthase subunit delta (180 aa).

It belongs to the ATPase delta chain family. As to quaternary structure, F-type ATPases have 2 components, F(1) - the catalytic core - and F(0) - the membrane proton channel. F(1) has five subunits: alpha(3), beta(3), gamma(1), delta(1), epsilon(1). F(0) has three main subunits: a(1), b(2) and c(10-14). The alpha and beta chains form an alternating ring which encloses part of the gamma chain. F(1) is attached to F(0) by a central stalk formed by the gamma and epsilon chains, while a peripheral stalk is formed by the delta and b chains.

Its subcellular location is the cell membrane. Functionally, f(1)F(0) ATP synthase produces ATP from ADP in the presence of a proton or sodium gradient. F-type ATPases consist of two structural domains, F(1) containing the extramembraneous catalytic core and F(0) containing the membrane proton channel, linked together by a central stalk and a peripheral stalk. During catalysis, ATP synthesis in the catalytic domain of F(1) is coupled via a rotary mechanism of the central stalk subunits to proton translocation. Its function is as follows. This protein is part of the stalk that links CF(0) to CF(1). It either transmits conformational changes from CF(0) to CF(1) or is implicated in proton conduction. This chain is ATP synthase subunit delta, found in Bacillus cereus (strain B4264).